The chain runs to 1110 residues: MADDGCSGLSDFITDDELFNEVTLNEVSDSQTGRPTKRRRLNSHEINTDSTGRREIEEAGTDSDTFDPSLPPNSKTTGRGRKSNDDNPAARKPKTYTPKYHVDQKPLFVTQTQPSSSPSRIRGPRWKAPERNKPSTVSKAKQKSPLPAIWGRKPSTIGSHGTNGKDIDAAIAASLRSFEEEQSARGDAEMLDDSIEEPGDTQVHATPGPVTNAEKETIFDFEDIPDDAFDFEPEFTETADKEPILISSQPRPSQNTTRRPTASQSTSFRQTTLLGGFASSSSKRSSQPATQTWPSSSRNEPPTHHELNKDALRTWIFPKNLGSRREYQFNIAHRALFHNLLVALPTGLGKTFIAATVMLNWFHWTKDAQIVFVAPTKPLVSQQVDACFHIAGIPRSQTTLLTGNTPPGVRAEEWRSKRVFFMTPQTIMNDLKTGIADPKRIVLLVVDEAHRATGAYAYVEIVKFLQRFNNSFRVLALTATPGATVEAVQEVIDGLSISRIEIRTEKSLDIRGFVHQRNVETITFENSRDMITSMELFAKALQPVVDRLRNQNAYWGRDPMALTPFGLTKARQEWNSSPAGRAASWPVKGTINSMFTVLASLAHAIDLLKYHGIGPFYRNLVSFEDSVLKEKKGGKCASQIVADGNFKVLMSKLRSWTNTEEFIGHPKLEYLRRAILNHFLDAGGKNGGDSEGSDSNTRVMIFSHFRDSAEEIVRVLRKHQPFVRPHVFVGQANAKGSEGMDQKTQLEVVGKFKTGTYNTIVATSIGEEGLDIGEVDLIICYDGHSSPIRMLQRMGRTGRKRAGNIILLLSKGKEEESYSKAKDSYEKMQQLIASGSRFTFHTDKSSRIVPQDIQPEAEEKMIEIPIENSQLGLPEPAKRSRAPKRPPKKFHMPDGVEKGFTKASRLGRTNTDSNGRSKRKRVVRTPSPELEEFPDLGDLCANQSQELADDPDFQEIAGKQIPRLRMDVYPEHQRSLRPTGFIEHGKYTRRVVKTFRKISKLGFDCEAQYRAIVGDPDDDGEGLEGLSTDREDDPQSVTAHQSREQPPRVEKRCGTEELSSLDIEAFFPNLAWPARPEAPRPESDGTDNRDQKPSQRKKRYMISDDSDVFE.

Residues L24 to R34 are compositionally biased toward polar residues. Disordered stretches follow at residues L24–K165, F178–N212, and T236–H305. Composition is skewed to basic and acidic residues over residues N42–E57 and F178–A188. Residues E189–G199 show a composition bias toward acidic residues. Composition is skewed to polar residues over residues I246–L273 and Q287–E300. Residues I331 to R499 form the Helicase ATP-binding domain. ATP is bound at residue L344 to T351. Positions D447 to H450 match the DEAH box motif. The region spanning I675–S846 is the Helicase C-terminal domain. Disordered regions lie at residues E867 to G937, V1013 to T1055, and N1069 to E1110. A compositionally biased stretch (basic residues) spans R879–F890. Basic and acidic residues-rich tracts occupy residues H891–F900, Q1041–T1055, and E1077–P1093.

The protein belongs to the DEAD box helicase family. DEAH subfamily. FANCM sub-subfamily. In terms of assembly, interacts with the MHF histone-fold complex to form the FANCM-MHF complex.

The protein localises to the nucleus. The catalysed reaction is ATP + H2O = ADP + phosphate + H(+). In terms of biological role, ATP-dependent DNA helicase involved in DNA damage repair by homologous recombination and in genome maintenance. Capable of unwinding D-loops. Plays a role in limiting crossover recombinants during mitotic DNA double-strand break (DSB) repair. Component of a FANCM-MHF complex which promotes gene conversion at blocked replication forks, probably by reversal of the stalled fork. In Coccidioides immitis (strain RS) (Valley fever fungus), this protein is ATP-dependent DNA helicase MPH1.